The following is a 467-amino-acid chain: Glutamate--tRNA ligase (467 aa).

A 'HIGH' region motif is present at residues 9-19 (PSPTGYLHIGG). Positions 237–241 (KLSKR) match the 'KMSKS' region motif. Lys240 serves as a coordination point for ATP.

Belongs to the class-I aminoacyl-tRNA synthetase family. Glutamate--tRNA ligase type 1 subfamily. In terms of assembly, monomer.

The protein resides in the cytoplasm. The catalysed reaction is tRNA(Glu) + L-glutamate + ATP = L-glutamyl-tRNA(Glu) + AMP + diphosphate. In terms of biological role, catalyzes the attachment of glutamate to tRNA(Glu) in a two-step reaction: glutamate is first activated by ATP to form Glu-AMP and then transferred to the acceptor end of tRNA(Glu). The sequence is that of Glutamate--tRNA ligase from Xanthomonas oryzae pv. oryzae (strain MAFF 311018).